Here is a 597-residue protein sequence, read N- to C-terminus: Elongation factor 4 (597 aa).

In terms of domain architecture, tr-type G spans 2–184 (KHIRNFSIIA…TIVKSIPAPE (183 aa)). GTP contacts are provided by residues 14–19 (DHGKST) and 131–134 (NKID).

It belongs to the TRAFAC class translation factor GTPase superfamily. Classic translation factor GTPase family. LepA subfamily.

The protein localises to the cell inner membrane. It catalyses the reaction GTP + H2O = GDP + phosphate + H(+). Its function is as follows. Required for accurate and efficient protein synthesis under certain stress conditions. May act as a fidelity factor of the translation reaction, by catalyzing a one-codon backward translocation of tRNAs on improperly translocated ribosomes. Back-translocation proceeds from a post-translocation (POST) complex to a pre-translocation (PRE) complex, thus giving elongation factor G a second chance to translocate the tRNAs correctly. Binds to ribosomes in a GTP-dependent manner. In Aliivibrio fischeri (strain ATCC 700601 / ES114) (Vibrio fischeri), this protein is Elongation factor 4.